We begin with the raw amino-acid sequence, 656 residues long: Threonine--tRNA ligase (656 aa).

Residues 1–63 (MAEIQLTFPD…LEDGAIEIIT (63 aa)) form the TGS domain. Positions 243–541 (DHRVIGNQLD…LTEIYKGAFP (299 aa)) are catalytic. Positions 337, 388, and 518 each coordinate Zn(2+).

The protein belongs to the class-II aminoacyl-tRNA synthetase family. In terms of assembly, homodimer. Zn(2+) is required as a cofactor.

Its subcellular location is the cytoplasm. It carries out the reaction tRNA(Thr) + L-threonine + ATP = L-threonyl-tRNA(Thr) + AMP + diphosphate + H(+). Catalyzes the attachment of threonine to tRNA(Thr) in a two-step reaction: L-threonine is first activated by ATP to form Thr-AMP and then transferred to the acceptor end of tRNA(Thr). Also edits incorrectly charged L-seryl-tRNA(Thr). The protein is Threonine--tRNA ligase of Latilactobacillus sakei subsp. sakei (strain 23K) (Lactobacillus sakei subsp. sakei).